Here is a 161-residue protein sequence, read N- to C-terminus: ATP synthase subunit b (161 aa).

The helical transmembrane segment at 10–29 threads the bilayer; sequence SVIQLMSFFLLLYILKKFLY.

Belongs to the ATPase B chain family. As to quaternary structure, F-type ATPases have 2 components, F(1) - the catalytic core - and F(0) - the membrane proton channel. F(1) has five subunits: alpha(3), beta(3), gamma(1), delta(1), epsilon(1). F(0) has three main subunits: a(1), b(2) and c(10-14). The alpha and beta chains form an alternating ring which encloses part of the gamma chain. F(1) is attached to F(0) by a central stalk formed by the gamma and epsilon chains, while a peripheral stalk is formed by the delta and b chains.

It localises to the cell inner membrane. Its function is as follows. F(1)F(0) ATP synthase produces ATP from ADP in the presence of a proton or sodium gradient. F-type ATPases consist of two structural domains, F(1) containing the extramembraneous catalytic core and F(0) containing the membrane proton channel, linked together by a central stalk and a peripheral stalk. During catalysis, ATP synthesis in the catalytic domain of F(1) is coupled via a rotary mechanism of the central stalk subunits to proton translocation. Functionally, component of the F(0) channel, it forms part of the peripheral stalk, linking F(1) to F(0). This Thermosipho melanesiensis (strain DSM 12029 / CIP 104789 / BI429) protein is ATP synthase subunit b.